Consider the following 256-residue polypeptide: Protein FixA (256 aa).

The protein belongs to the ETF beta-subunit/FixA family. In terms of assembly, heterodimer of FixA and FixB.

Its pathway is amine and polyamine metabolism; carnitine metabolism. Its function is as follows. Required for anaerobic carnitine reduction. May bring reductant to CaiA. The sequence is that of Protein FixA from Escherichia coli O17:K52:H18 (strain UMN026 / ExPEC).